We begin with the raw amino-acid sequence, 467 residues long: Chromosomal replication initiator protein DnaA (467 aa).

Residues Met-1–Ser-85 form a domain I, interacts with DnaA modulators region. The segment at Ser-85 to His-130 is domain II. Positions Asn-87–Lys-129 are disordered. A compositionally biased stretch (basic and acidic residues) spans Arg-99–Glu-109. Positions Asn-131–Ala-347 are domain III, AAA+ region. Gly-175, Gly-177, Lys-178, and Thr-179 together coordinate ATP. A domain IV, binds dsDNA region spans residues Gln-348–Asn-467.

This sequence belongs to the DnaA family. As to quaternary structure, oligomerizes as a right-handed, spiral filament on DNA at oriC.

It localises to the cytoplasm. Functionally, plays an essential role in the initiation and regulation of chromosomal replication. ATP-DnaA binds to the origin of replication (oriC) to initiate formation of the DNA replication initiation complex once per cell cycle. Binds the DnaA box (a 9 base pair repeat at the origin) and separates the double-stranded (ds)DNA. Forms a right-handed helical filament on oriC DNA; dsDNA binds to the exterior of the filament while single-stranded (ss)DNA is stabiized in the filament's interior. The ATP-DnaA-oriC complex binds and stabilizes one strand of the AT-rich DNA unwinding element (DUE), permitting loading of DNA polymerase. After initiation quickly degrades to an ADP-DnaA complex that is not apt for DNA replication. Binds acidic phospholipids. The protein is Chromosomal replication initiator protein DnaA of Hydrogenovibrio crunogenus (strain DSM 25203 / XCL-2) (Thiomicrospira crunogena).